Consider the following 241-residue polypeptide: LexA repressor (241 aa).

The H-T-H motif DNA-binding region spans 41–61 (FREIGNAAGLKSPSSVKHQLQ). Residues Ser165 and Lys202 each act as for autocatalytic cleavage activity in the active site.

It belongs to the peptidase S24 family. In terms of assembly, homodimer.

It catalyses the reaction Hydrolysis of Ala-|-Gly bond in repressor LexA.. In terms of biological role, represses a number of genes involved in the response to DNA damage (SOS response), including recA and lexA. In the presence of single-stranded DNA, RecA interacts with LexA causing an autocatalytic cleavage which disrupts the DNA-binding part of LexA, leading to derepression of the SOS regulon and eventually DNA repair. This Bifidobacterium longum subsp. infantis (strain ATCC 15697 / DSM 20088 / JCM 1222 / NCTC 11817 / S12) protein is LexA repressor.